The primary structure comprises 359 residues: MRKIVHVDMDAFYASVEQRDDPGLRGKPVVVAWRGARSVVCAASYEARTFGIRSAMPAVRAERLCPDAIFVPPDFARYKAVSRQVREIFHRHTDLVEPLSLDEAYLDVTHAKTGMQLATEVAQLIRTQIREETQLTASAGIAPNKFLAKIASDWRKPDGQFVIAPSRVDAFLLPLKVNRIPGVGKVMDGKLAALGIVTVADLRQRPLEELQAHFGSFGQSLYRRARGIDERPVEPDQEVQSVSSEDTFSEDLALDALDPHILRLAEKTWLATRRTERIGRTVVLKLKTSNFRILTRSYTPEQPPTSQEALAQIALALTRRVELPTQTRYRLVGVGLSGFSDVEDGAVQGQLFGQMPPLE.

One can recognise a UmuC domain in the interval 4-184; the sequence is IVHVDMDAFY…LKVNRIPGVG (181 aa). Residues aspartate 8 and aspartate 102 each contribute to the Mg(2+) site. Glutamate 103 is a catalytic residue.

This sequence belongs to the DNA polymerase type-Y family. Monomer. Requires Mg(2+) as cofactor.

It is found in the cytoplasm. The enzyme catalyses DNA(n) + a 2'-deoxyribonucleoside 5'-triphosphate = DNA(n+1) + diphosphate. In terms of biological role, poorly processive, error-prone DNA polymerase involved in untargeted mutagenesis. Copies undamaged DNA at stalled replication forks, which arise in vivo from mismatched or misaligned primer ends. These misaligned primers can be extended by PolIV. Exhibits no 3'-5' exonuclease (proofreading) activity. May be involved in translesional synthesis, in conjunction with the beta clamp from PolIII. In Xanthomonas euvesicatoria pv. vesicatoria (strain 85-10) (Xanthomonas campestris pv. vesicatoria), this protein is DNA polymerase IV.